A 714-amino-acid polypeptide reads, in one-letter code: Protein spire homolog 2 (714 aa).

Residues 22 to 203 (LSLEEVLKAY…RALFVETLEL (182 aa)) enclose the KIND domain. A disordered region spans residues 136–162 (DSEDSGCGAADEGYGGPEEEEEAEGVP). WH2 domains follow at residues 248 to 262 (QLMRELRRGVKLKKV), 278 to 296 (PFEMLMQDIRARNYKLRKV), and 342 to 359 (LHEKILEEIKQERRLRPV). Phosphoserine occurs at positions 371, 440, 442, and 476. Residues 453 to 516 (VASGLQSATH…SSGDRPEASM (64 aa)) are disordered. Residues 486–496 (DQGTCPASVSD) are compositionally biased toward polar residues. The segment at 534 to 554 (LALTVEEVMDVRRVLVKAEME) is spir-box.

The protein belongs to the spire family.

The protein resides in the cytoplasm. It localises to the cytoskeleton. The protein localises to the cytosol. It is found in the cell membrane. Its subcellular location is the cytoplasmic vesicle membrane. Functionally, acts as an actin nucleation factor, remains associated with the slow-growing pointed end of the new filament. Involved in intracellular vesicle transport along actin fibers, providing a novel link between actin cytoskeleton dynamics and intracellular transport. Required for asymmetric spindle positioning and asymmetric cell division during meiosis. Required for normal formation of the cleavage furrow and for polar body extrusion during female germ cell meiosis. Also acts in the nucleus: together with SPIRE1 and SPIRE2, promotes assembly of nuclear actin filaments in response to DNA damage in order to facilitate movement of chromatin and repair factors after DNA damage. This Homo sapiens (Human) protein is Protein spire homolog 2 (SPIRE2).